Reading from the N-terminus, the 1475-residue chain is Mediator of RNA polymerase II transcription subunit 1.1 (1475 aa).

Disordered regions lie at residues 579 to 600 (STIG…LTSM), 645 to 894 (GLAS…KMRE), and 908 to 1475 (PDVE…IDDE). A compositionally biased stretch (low complexity) spans 655-666 (PVAAAAAAPGGP). The segment covering 755–766 (QRSSSEQHNPNP) has biased composition (polar residues). Low complexity predominate over residues 767 to 800 (HQMSQYQMQQYQQNQQFRMHQMQQQQQQQFQMQS). Residues 810–819 (TDEDSDEECD) are compositionally biased toward acidic residues. Residues 829–838 (STSSRMSSVP) are compositionally biased toward low complexity. Positions 869 to 880 (TPSPLSAPPKPF) are enriched in pro residues. Positions 915–929 (QQLSSSSSSSQAEAS) are enriched in low complexity. Residues 941–952 (PPKPSSSSAPPP) show a composition bias toward pro residues. Composition is skewed to low complexity over residues 969 to 989 (QQEQ…SELA) and 1037 to 1049 (QKPT…STSS). Basic and acidic residues-rich tracts occupy residues 1052-1070 (PPKK…EKLI), 1080-1148 (VVDD…EKEP), and 1155-1180 (EKKD…KEYS). Residues 1098–1135 (DRDRDEDREKVRDKEDKAQREKDKKEKERERRRQRDRD) are a coiled coil. Residues 1181 to 1193 (KASTTSLIPTLSL) show a composition bias toward polar residues. Residues 1199–1215 (PKKDTVEEEKKDVKEEA) are compositionally biased toward basic and acidic residues. The segment covering 1242 to 1252 (APVAPAVQQQQ) has biased composition (low complexity). Pro residues predominate over residues 1281 to 1291 (PLQPPPPPQMT). Residues 1308–1317 (PGSSRPSGNR) show a composition bias toward polar residues. Pro residues-rich tracts occupy residues 1320 to 1334 (PLPP…PPPD) and 1425 to 1440 (PPAP…PKDP).

The protein belongs to the Mediator complex subunit 1 family. In terms of assembly, component of the Mediator complex.

It is found in the nucleus. In terms of biological role, component of the Mediator complex, a coactivator involved in the regulated transcription of nearly all RNA polymerase II-dependent genes. Mediator functions as a bridge to convey information from gene-specific regulatory proteins to the basal RNA polymerase II transcription machinery. Mediator is recruited to promoters by direct interactions with regulatory proteins and serves as a scaffold for the assembly of a functional preinitiation complex with RNA polymerase II and the general transcription factors. The protein is Mediator of RNA polymerase II transcription subunit 1.1 (sop-3) of Caenorhabditis elegans.